Consider the following 836-residue polypeptide: Serine/threonine-protein kinase ATG1 (836 aa).

One can recognise a Protein kinase domain in the interval Y21–V321. ATP-binding positions include I27–V35 and K50. D168 functions as the Proton acceptor in the catalytic mechanism. 3 disordered regions span residues E387–R425, N458–R489, and C619–A642. Over residues L395 to Q404 the composition is skewed to low complexity. Polar residues-rich tracts occupy residues R411–R425, N459–A468, and G630–P640. An interaction with ATG13 region spans residues I571–S836.

It belongs to the protein kinase superfamily. Ser/Thr protein kinase family. APG1/unc-51/ULK1 subfamily. Homodimer. Dimerization requires the presence of ATG13. Forms a ternary complex with ATG13 and ATG17.

It is found in the cytoplasm. It localises to the preautophagosomal structure membrane. The catalysed reaction is L-seryl-[protein] + ATP = O-phospho-L-seryl-[protein] + ADP + H(+). It catalyses the reaction L-threonyl-[protein] + ATP = O-phospho-L-threonyl-[protein] + ADP + H(+). Serine/threonine protein kinase involved in the cytoplasm to vacuole transport (Cvt) and found to be essential in autophagy, where it is required for the formation of autophagosomes. Involved in the clearance of protein aggregates which cannot be efficiently cleared by the proteasome. Required for selective autophagic degradation of the nucleus (nucleophagy) as well as for mitophagy which contributes to regulate mitochondrial quantity and quality by eliminating the mitochondria to a basal level to fulfill cellular energy requirements and preventing excess ROS production. Also involved in endoplasmic reticulum-specific autophagic process, in selective removal of ER-associated degradation (ERAD) substrates. Plays a key role in ATG9 and ATG23 cycling through the pre-autophagosomal structure and is necessary to promote ATG18 binding to ATG9 through phosphorylation of ATG9. Catalyzes phosphorylation of ATG4, decreasing the interaction between ATG4 and ATG8 and impairing deconjugation of PE-conjugated forms of ATG8. This chain is Serine/threonine-protein kinase ATG1, found in Kluyveromyces marxianus (strain DMKU3-1042 / BCC 29191 / NBRC 104275) (Yeast).